A 256-amino-acid polypeptide reads, in one-letter code: 3-isopropylmalate dehydratase small subunit 2 (256 aa).

The transit peptide at 1 to 59 (MAYSLPTFPQALPCSSTKTSSSLATFRSPFLRFNGSTSLIPSSISITSRGTSSPTIIPR) directs the protein to the chloroplast.

It belongs to the LeuD family. As to quaternary structure, heterodimer of the large LEUC/IIL1 subunit and the small LEUD (SSU1, SSU2 or SSU3) subunits. As to expression, expressed in vascular bundles of roots, cotyledons and rosette leaves. Expressed in stem vascular bundles which branche off into lateral inflorescences. Expressed in connective tissues in anthers. In young seedlings, expressed in cotyledon epidermal cells and vasculare bundles. In hypocotyls, expressed in parenchyma cells surrounding the vasculature and further peripheral cells. In seedling roots, expressed in cells along the vasculature. In roots of adult plants, expressed in cells closely associated with the stele. In flowering stalks, expressed in parenchyma cells associated with the phloem or the xylem. Expressed in the vasculature of sepals and petals.

Its subcellular location is the plastid. The protein localises to the chloroplast stroma. It catalyses the reaction (2R,3S)-3-isopropylmalate = (2S)-2-isopropylmalate. It carries out the reaction a 2-(omega-methylsulfanyl)alkylmalate = a 2-(omega-methylsulfanyl)alkylmaleate + H2O. The catalysed reaction is 2-(3-methylsulfanyl)propylmalate = 2-(2-methylsulfanyl)propylmaleate + H2O. The enzyme catalyses a 3-(omega-methylsulfanyl)alkylmalate = a 2-(omega-methylsulfanyl)alkylmaleate + H2O. It catalyses the reaction 2-(2-methylsulfanyl)ethylmalate = 2-(2-methylsulfanyl)ethylmaleate + H2O. It carries out the reaction 3-(2-methylsulfanyl)ethylmalate = 2-(2-methylsulfanyl)ethylmaleate + H2O. The catalysed reaction is 3-(3-methylsulfanyl)propylmalate = 2-(2-methylsulfanyl)propylmaleate + H2O. The protein operates within amino-acid biosynthesis; L-leucine biosynthesis; L-leucine from 3-methyl-2-oxobutanoate: step 2/4. Its function is as follows. Catalyzes the isomerization between 2-isopropylmalate and 3-isopropylmalate, via the formation of 2-isopropylmaleate. Functions redundantly with LEUD2 in the methionine chain elongation pathway of aliphatic glucosinolate formation. This chain is 3-isopropylmalate dehydratase small subunit 2, found in Arabidopsis thaliana (Mouse-ear cress).